Reading from the N-terminus, the 365-residue chain is Flagellar P-ring protein (365 aa).

Positions 1 to 19 (MMLSLCAIAGLLLAPSIQA) are cleaved as a signal peptide.

It belongs to the FlgI family. The basal body constitutes a major portion of the flagellar organelle and consists of four rings (L,P,S, and M) mounted on a central rod.

The protein localises to the periplasm. It localises to the bacterial flagellum basal body. In terms of biological role, assembles around the rod to form the L-ring and probably protects the motor/basal body from shearing forces during rotation. This chain is Flagellar P-ring protein, found in Sodalis glossinidius (strain morsitans).